The primary structure comprises 659 residues: Protein phosphatase Slingshot homolog 3 (659 aa).

A compositionally biased stretch (polar residues) spans 1–16; that stretch reads MALVTVSRSPPGSGAS. Residues 1–31 are disordered; it reads MALVTVSRSPPGSGASTPVGPWDQAVQRRSR. Residue Ala-2 is modified to N-acetylalanine. Phosphoserine occurs at positions 9 and 37. The disordered stretch occupies residues 46–96; the sequence is LGLQDGGDNDDAAEASSEPTEKAPSEEELHGDQTDFGQGSQSPQKQEEQRQ. Residues 64 to 78 are compositionally biased toward basic and acidic residues; it reads PTEKAPSEEELHGDQ. Residues 80–89 show a composition bias toward polar residues; it reads DFGQGSQSPQ. 2 positions are modified to phosphoserine: Ser-85 and Ser-87. The DEK-C domain occupies 269 to 324; that stretch reads EQMEQAIRAELWKVLDVSDLESVTSKEIRQALELRLGLPLQQYRDFIDNQMLLLVA. Positions 328-469 constitute a Tyrosine-protein phosphatase domain; it reads RASRIFPHLY…LQIYQGILTA (142 aa). Catalysis depends on Cys-413, which acts as the Phosphocysteine intermediate. Disordered regions lie at residues 482–534, 547–603, and 617–638; these read GVSP…RINL, SLEL…RQSV, and QAFQEQEQGQGQGQGEPCISST. Positions 547–557 are enriched in low complexity; it reads SLELESTSETS.

Belongs to the protein-tyrosine phosphatase family. In terms of assembly, does not bind to, or colocalize with, filamentous actin.

It localises to the cytoplasm. Its subcellular location is the cytoskeleton. The protein localises to the nucleus. It carries out the reaction O-phospho-L-tyrosyl-[protein] + H2O = L-tyrosyl-[protein] + phosphate. The catalysed reaction is O-phospho-L-seryl-[protein] + H2O = L-seryl-[protein] + phosphate. It catalyses the reaction O-phospho-L-threonyl-[protein] + H2O = L-threonyl-[protein] + phosphate. Functionally, protein phosphatase which may play a role in the regulation of actin filament dynamics. Can dephosphorylate and activate the actin binding/depolymerizing factor cofilin, which subsequently binds to actin filaments and stimulates their disassembly. The polypeptide is Protein phosphatase Slingshot homolog 3 (SSH3) (Homo sapiens (Human)).